Reading from the N-terminus, the 1233-residue chain is ATP-dependent helicase/nuclease subunit A (1233 aa).

The 472-residue stretch at 3 to 474 (TKWTEEQKQA…ILLYKNFRSR (472 aa)) folds into the UvrD-like helicase ATP-binding domain. 24–31 (AAAGSGKT) is an ATP binding site. The UvrD-like helicase C-terminal domain occupies 518 to 809 (VTGGAVELHL…RIMSIHKSKG (292 aa)). Residues 533-555 (VEEEVEEKEEEKNEEKDFEEEEE) form a disordered region.

The protein belongs to the helicase family. AddA subfamily. In terms of assembly, heterodimer of AddA and AddB/RexB. Mg(2+) is required as a cofactor.

The enzyme catalyses Couples ATP hydrolysis with the unwinding of duplex DNA by translocating in the 3'-5' direction.. It carries out the reaction ATP + H2O = ADP + phosphate + H(+). Functionally, the heterodimer acts as both an ATP-dependent DNA helicase and an ATP-dependent, dual-direction single-stranded exonuclease. Recognizes the chi site generating a DNA molecule suitable for the initiation of homologous recombination. The AddA nuclease domain is required for chi fragment generation; this subunit has the helicase and 3' -&gt; 5' nuclease activities. The protein is ATP-dependent helicase/nuclease subunit A of Thermoanaerobacter pseudethanolicus (strain ATCC 33223 / 39E) (Clostridium thermohydrosulfuricum).